The following is a 739-amino-acid chain: Phosphoribosylformylglycinamidine synthase subunit PurL (739 aa).

H53 is a catalytic residue. Residues Y56 and K95 each coordinate ATP. E97 is a binding site for Mg(2+). Substrate is bound by residues 98-101 (SHNH) and R120. The active-site Proton acceptor is the H99. D121 is a Mg(2+) binding site. Residue Q244 coordinates substrate. A Mg(2+)-binding site is contributed by D274. 318–320 (ESQ) lines the substrate pocket. Positions 501 and 538 each coordinate ATP. N539 lines the Mg(2+) pocket. S541 provides a ligand contact to substrate.

The protein belongs to the FGAMS family. Monomer. Part of the FGAM synthase complex composed of 1 PurL, 1 PurQ and 2 PurS subunits.

It localises to the cytoplasm. The catalysed reaction is N(2)-formyl-N(1)-(5-phospho-beta-D-ribosyl)glycinamide + L-glutamine + ATP + H2O = 2-formamido-N(1)-(5-O-phospho-beta-D-ribosyl)acetamidine + L-glutamate + ADP + phosphate + H(+). It participates in purine metabolism; IMP biosynthesis via de novo pathway; 5-amino-1-(5-phospho-D-ribosyl)imidazole from N(2)-formyl-N(1)-(5-phospho-D-ribosyl)glycinamide: step 1/2. In terms of biological role, part of the phosphoribosylformylglycinamidine synthase complex involved in the purines biosynthetic pathway. Catalyzes the ATP-dependent conversion of formylglycinamide ribonucleotide (FGAR) and glutamine to yield formylglycinamidine ribonucleotide (FGAM) and glutamate. The FGAM synthase complex is composed of three subunits. PurQ produces an ammonia molecule by converting glutamine to glutamate. PurL transfers the ammonia molecule to FGAR to form FGAM in an ATP-dependent manner. PurS interacts with PurQ and PurL and is thought to assist in the transfer of the ammonia molecule from PurQ to PurL. The protein is Phosphoribosylformylglycinamidine synthase subunit PurL of Listeria monocytogenes serotype 4b (strain CLIP80459).